Here is a 100-residue protein sequence, read N- to C-terminus: Urease subunit gamma (100 aa).

It belongs to the urease gamma subunit family. In terms of assembly, heterotrimer of UreA (gamma), UreB (beta) and UreC (alpha) subunits. Three heterotrimers associate to form the active enzyme.

The protein localises to the cytoplasm. It catalyses the reaction urea + 2 H2O + H(+) = hydrogencarbonate + 2 NH4(+). The protein operates within nitrogen metabolism; urea degradation; CO(2) and NH(3) from urea (urease route): step 1/1. This chain is Urease subunit gamma, found in Cupriavidus metallidurans (strain ATCC 43123 / DSM 2839 / NBRC 102507 / CH34) (Ralstonia metallidurans).